The chain runs to 269 residues: Sushi domain-containing protein 3 (269 aa).

Positions 1 to 23 are disordered; it reads MRRTSATLRGRARPRWRAGNTTP. The Extracellular segment spans residues 1-103; the sequence is MRRTSATLRG…VPPHETFGFK (103 aa). The Sushi domain occupies 30–93; it reads GTCAQLHPPP…WSSGSPVCKA (64 aa). Disulfide bonds link Cys-32/Cys-75 and Cys-61/Cys-91. Residues 104 to 124 form a helical membrane-spanning segment; that stretch reads VAVIASIVSCAIILLMSMAFL. The Cytoplasmic segment spans residues 125–269; sequence TCCLLKCVQK…PGRPKVYLPG (145 aa). A disordered region spans residues 171 to 237; sequence NNSSSVGGGN…RMGTPGPGGC (67 aa). Positions 176 to 190 are enriched in gly residues; that stretch reads VGGGNGGPSGGGGKP.

The protein localises to the cell membrane. This is Sushi domain-containing protein 3 (Susd3) from Mus musculus (Mouse).